A 644-amino-acid polypeptide reads, in one-letter code: DNA mismatch repair protein MutL (644 aa).

The segment at 336–400 (ERPFEPSSPQ…EISRDSSLGE (65 aa)) is disordered. The span at 373-400 (SKTHSTWDEASRVDTSRAEISRDSSLGE) shows a compositional bias: basic and acidic residues.

The protein belongs to the DNA mismatch repair MutL/HexB family.

This protein is involved in the repair of mismatches in DNA. It is required for dam-dependent methyl-directed DNA mismatch repair. May act as a 'molecular matchmaker', a protein that promotes the formation of a stable complex between two or more DNA-binding proteins in an ATP-dependent manner without itself being part of a final effector complex. This Shewanella sp. (strain MR-7) protein is DNA mismatch repair protein MutL.